A 252-amino-acid polypeptide reads, in one-letter code: Carbohydrate deacetylase (252 aa).

2 residues coordinate Mg(2+): H59 and H122.

It belongs to the YdjC deacetylase family. As to quaternary structure, homodimer. It depends on Mg(2+) as a cofactor.

Its function is as follows. Probably catalyzes the deacetylation of acetylated carbohydrates an important step in the degradation of oligosaccharides. The polypeptide is Carbohydrate deacetylase (Vibrio vulnificus (strain CMCP6)).